We begin with the raw amino-acid sequence, 57 residues long: Large ribosomal subunit protein bL32 (57 aa).

A disordered region spans residues 1–22 (MAVPKKKTSKSKRDKRRATWRH).

It belongs to the bacterial ribosomal protein bL32 family.

This chain is Large ribosomal subunit protein bL32, found in Nostoc punctiforme (strain ATCC 29133 / PCC 73102).